We begin with the raw amino-acid sequence, 253 residues long: 3-dehydroquinate dehydratase (253 aa).

3-dehydroquinate contacts are provided by residues 46-48 (EWR) and Arg-82. His-143 functions as the Proton donor/acceptor in the catalytic mechanism. Lys-170 (schiff-base intermediate with substrate) is an active-site residue. Arg-213, Ser-232, and Gln-236 together coordinate 3-dehydroquinate.

It belongs to the type-I 3-dehydroquinase family. In terms of assembly, homodimer.

The catalysed reaction is 3-dehydroquinate = 3-dehydroshikimate + H2O. The protein operates within metabolic intermediate biosynthesis; chorismate biosynthesis; chorismate from D-erythrose 4-phosphate and phosphoenolpyruvate: step 3/7. Functionally, involved in the third step of the chorismate pathway, which leads to the biosynthesis of aromatic amino acids. Catalyzes the cis-dehydration of 3-dehydroquinate (DHQ) and introduces the first double bond of the aromatic ring to yield 3-dehydroshikimate. The sequence is that of 3-dehydroquinate dehydratase from Syntrophotalea carbinolica (strain DSM 2380 / NBRC 103641 / GraBd1) (Pelobacter carbinolicus).